A 64-amino-acid polypeptide reads, in one-letter code: Alpha-mammal toxin Lqh2 (64 aa).

Residues 2 to 64 form the LCN-type CS-alpha/beta domain; it reads KDGYIVDDVN…VRTKGPGRCR (63 aa). Disulfide bonds link C12-C63, C16-C36, C22-C46, and C26-C48. R64 bears the Arginine amide mark.

This sequence belongs to the long (4 C-C) scorpion toxin superfamily. Sodium channel inhibitor family. Alpha subfamily. As to expression, expressed by the venom gland.

The protein localises to the secreted. Alpha toxins bind voltage-independently at site-3 of sodium channels (Nav) and inhibit the inactivation of the activated channels, thereby blocking neuronal transmission. The dissociation is voltage-dependent. Is active on mammals and competes for alpha-toxins binding on both mammalian and cockroach sodium channels. The polypeptide is Alpha-mammal toxin Lqh2 (Leiurus hebraeus (Hebrew deathstalker scorpion)).